A 105-amino-acid chain; its full sequence is UPF0145 protein AHA_2580 (105 aa).

It belongs to the UPF0145 family.

The polypeptide is UPF0145 protein AHA_2580 (Aeromonas hydrophila subsp. hydrophila (strain ATCC 7966 / DSM 30187 / BCRC 13018 / CCUG 14551 / JCM 1027 / KCTC 2358 / NCIMB 9240 / NCTC 8049)).